We begin with the raw amino-acid sequence, 383 residues long: V-type proton ATPase subunit C 1-A (383 aa).

Thr2 is subject to N-acetylthreonine.

It belongs to the V-ATPase C subunit family. V-ATPase is a heteromultimeric enzyme made up of two complexes: the ATP-hydrolytic V1 complex and the proton translocation V0 complex. The V1 complex consists of three catalytic AB heterodimers that form a heterohexamer, three peripheral stalks each consisting of EG heterodimers, one central rotor including subunits D and F, and the regulatory subunits C and H. The proton translocation complex V0 consists of the proton transport subunit a, a ring of proteolipid subunits c9c'', rotary subunit d, subunits e and f, and two accessory subunits.

In terms of biological role, subunit of the V1 complex of vacuolar(H+)-ATPase (V-ATPase), a multisubunit enzyme composed of a peripheral complex (V1) that hydrolyzes ATP and a membrane integral complex (V0) that translocates protons. V-ATPase is responsible for acidifying and maintaining the pH of intracellular compartments and in some cell types, is targeted to the plasma membrane, where it is responsible for acidifying the extracellular environment. Subunit C is necessary for the assembly of the catalytic sector of the enzyme and is likely to have a specific function in its catalytic activity. The protein is V-type proton ATPase subunit C 1-A (atp6v1c1a) of Danio rerio (Zebrafish).